The following is a 341-amino-acid chain: L-threonine 3-dehydrogenase (341 aa).

Zn(2+) is bound at residue cysteine 38. Residues threonine 40 and histidine 43 each act as charge relay system in the active site. 6 residues coordinate Zn(2+): histidine 63, glutamate 64, cysteine 93, cysteine 96, cysteine 99, and cysteine 107. Residues isoleucine 175, aspartate 195, arginine 200, 262–264 (LGI), and 286–287 (IY) contribute to the NAD(+) site.

The protein belongs to the zinc-containing alcohol dehydrogenase family. As to quaternary structure, homotetramer. Zn(2+) serves as cofactor.

Its subcellular location is the cytoplasm. The enzyme catalyses L-threonine + NAD(+) = (2S)-2-amino-3-oxobutanoate + NADH + H(+). It functions in the pathway amino-acid degradation; L-threonine degradation via oxydo-reductase pathway; glycine from L-threonine: step 1/2. Catalyzes the NAD(+)-dependent oxidation of L-threonine to 2-amino-3-ketobutyrate. The polypeptide is L-threonine 3-dehydrogenase (Photorhabdus laumondii subsp. laumondii (strain DSM 15139 / CIP 105565 / TT01) (Photorhabdus luminescens subsp. laumondii)).